Consider the following 101-residue polypeptide: NADH-quinone oxidoreductase subunit K (101 aa).

Transmembrane regions (helical) follow at residues 4–24, 30–50, and 62–82; these read LGHM…GIFL, IVLL…FVAF, and FVFF…AILV.

It belongs to the complex I subunit 4L family. NDH-1 is composed of 14 different subunits. Subunits NuoA, H, J, K, L, M, N constitute the membrane sector of the complex.

Its subcellular location is the cell inner membrane. It carries out the reaction a quinone + NADH + 5 H(+)(in) = a quinol + NAD(+) + 4 H(+)(out). In terms of biological role, NDH-1 shuttles electrons from NADH, via FMN and iron-sulfur (Fe-S) centers, to quinones in the respiratory chain. The immediate electron acceptor for the enzyme in this species is believed to be ubiquinone. Couples the redox reaction to proton translocation (for every two electrons transferred, four hydrogen ions are translocated across the cytoplasmic membrane), and thus conserves the redox energy in a proton gradient. The sequence is that of NADH-quinone oxidoreductase subunit K from Stenotrophomonas maltophilia (strain R551-3).